A 700-amino-acid chain; its full sequence is Elongation factor G (700 aa).

In terms of domain architecture, tr-type G spans 10 to 286; the sequence is TKVRNIGIMA…AVIDYLPSPL (277 aa). GTP contacts are provided by residues 19–26, 83–87, and 137–140; these read AHIDAGKT, DTPGH, and NKMD.

The protein belongs to the TRAFAC class translation factor GTPase superfamily. Classic translation factor GTPase family. EF-G/EF-2 subfamily.

Its subcellular location is the cytoplasm. Functionally, catalyzes the GTP-dependent ribosomal translocation step during translation elongation. During this step, the ribosome changes from the pre-translocational (PRE) to the post-translocational (POST) state as the newly formed A-site-bound peptidyl-tRNA and P-site-bound deacylated tRNA move to the P and E sites, respectively. Catalyzes the coordinated movement of the two tRNA molecules, the mRNA and conformational changes in the ribosome. The polypeptide is Elongation factor G (Kineococcus radiotolerans (strain ATCC BAA-149 / DSM 14245 / SRS30216)).